The chain runs to 343 residues: Heat-inducible transcription repressor HrcA (343 aa).

It belongs to the HrcA family.

Its function is as follows. Negative regulator of class I heat shock genes (grpE-dnaK-dnaJ and groELS operons). Prevents heat-shock induction of these operons. This Natranaerobius thermophilus (strain ATCC BAA-1301 / DSM 18059 / JW/NM-WN-LF) protein is Heat-inducible transcription repressor HrcA.